Reading from the N-terminus, the 337-residue chain is tRNA N6-adenosine threonylcarbamoyltransferase (337 aa).

Residues His-110 and His-114 each coordinate Fe cation. Residues 133 to 137 (LVSGK), Asp-166, Gly-179, and Asn-271 each bind substrate. Position 300 (Asp-300) interacts with Fe cation.

The protein belongs to the KAE1 / TsaD family. Requires Fe(2+) as cofactor.

It localises to the cytoplasm. The enzyme catalyses L-threonylcarbamoyladenylate + adenosine(37) in tRNA = N(6)-L-threonylcarbamoyladenosine(37) in tRNA + AMP + H(+). In terms of biological role, required for the formation of a threonylcarbamoyl group on adenosine at position 37 (t(6)A37) in tRNAs that read codons beginning with adenine. Is involved in the transfer of the threonylcarbamoyl moiety of threonylcarbamoyl-AMP (TC-AMP) to the N6 group of A37, together with TsaE and TsaB. TsaD likely plays a direct catalytic role in this reaction. The protein is tRNA N6-adenosine threonylcarbamoyltransferase of Buchnera aphidicola subsp. Schizaphis graminum (strain Sg).